Reading from the N-terminus, the 287-residue chain is MAAKIIDGKTIAQQVKDEVAARVTQRLAAGKRAPGLAVVLVGENPASQIYVSSKRKVCEEVGFISRSYDLPATTTESELLTLIDQLNADQAIDGILVQLPLPEGIDNTKVIERIAPSKDVDGFHPYNVGRLCQRAPLLRACTPRGIVTLLERYNIDTFGLNAVVVGASNIVGRPMSLELLLAGCTTTVTHRFTKNLRHHIENADLLVVAVGKPGFIPGEWIKPGAIVLDVGINRLESGKVVGDVEFETAQERASYISPVPGGVGPMTVATLIQNTLQACEEYHDHAE.

Residues 166 to 168 (GAS) and isoleucine 232 each bind NADP(+).

The protein belongs to the tetrahydrofolate dehydrogenase/cyclohydrolase family. Homodimer.

The catalysed reaction is (6R)-5,10-methylene-5,6,7,8-tetrahydrofolate + NADP(+) = (6R)-5,10-methenyltetrahydrofolate + NADPH. It carries out the reaction (6R)-5,10-methenyltetrahydrofolate + H2O = (6R)-10-formyltetrahydrofolate + H(+). It functions in the pathway one-carbon metabolism; tetrahydrofolate interconversion. Its function is as follows. Catalyzes the oxidation of 5,10-methylenetetrahydrofolate to 5,10-methenyltetrahydrofolate and then the hydrolysis of 5,10-methenyltetrahydrofolate to 10-formyltetrahydrofolate. The sequence is that of Bifunctional protein FolD from Pectobacterium carotovorum subsp. carotovorum (strain PC1).